The sequence spans 379 residues: Subtilisin Carlsberg (379 aa).

The first 29 residues, 1 to 29, serve as a signal peptide directing secretion; the sequence is MMRKKSFWLGMLTAFMLVFTMAFSDSASA. The propeptide occupies 30 to 105; it reads AQPAKNVEKD…VEEDHVAHAL (76 aa). Residues 44-102 form the Inhibitor I9 domain; that stretch reads FKSGVKTASVKKDIIKESGGKVDKQFRIINAAKAKLDKEALKEVKNDPDVAYVEEDHVA. Residue Gln-107 coordinates Ca(2+). In terms of domain architecture, Peptidase S8 spans 110-378; sequence PYGIPLIKAD…KGLINVEAAA (269 aa). The active-site Charge relay system is Asp-137. Ca(2+) is bound at residue Asp-146. His-168 acts as the Charge relay system in catalysis. Leu-179, Asn-181, Thr-183, Val-185, Ala-273, Tyr-275, and Val-278 together coordinate Ca(2+). Ser-325 acts as the Charge relay system in catalysis.

This sequence belongs to the peptidase S8 family. It depends on Ca(2+) as a cofactor.

The protein localises to the secreted. The enzyme catalyses Hydrolysis of proteins with broad specificity for peptide bonds, and a preference for a large uncharged residue in P1. Hydrolyzes peptide amides.. With respect to regulation, inhibited by p-chlorophenyl and 1-naphthyl boronic acid derivatives. Its function is as follows. Subtilisin is an extracellular alkaline serine protease, it catalyzes the hydrolysis of proteins and peptide amides. Shows high specificity for aromatic and hydrophobic amino acids in the P1 substrate position. May play an important role in the degradation of feather keratin. The sequence is that of Subtilisin Carlsberg from Bacillus licheniformis.